We begin with the raw amino-acid sequence, 202 residues long: Nascent polypeptide-associated complex subunit alpha (202 aa).

Over residues 1-19 the composition is skewed to basic and acidic residues; it reads MADPRVEELPDEEVPKTNV. A disordered region spans residues 1–42; the sequence is MADPRVEELPDEEVPKTNVEDAGSSSESEAGDEPTIPGGAAV. One can recognise an NAC-A/B domain in the interval 46–111; sequence SRNEKKARKA…AKIEDLNATA (66 aa). Over residues 117 to 126 the composition is skewed to low complexity; it reads QQLAEAAANE. The disordered stretch occupies residues 117-165; the sequence is QQLAEAAANEHAGHDHEHDHGKGKAPEAEAKKEEEEDDGEEVDESGLEA. A compositionally biased stretch (basic and acidic residues) spans 127-149; it reads HAGHDHEHDHGKGKAPEAEAKKE. The span at 150-162 shows a compositional bias: acidic residues; sequence EEEDDGEEVDESG. Positions 163-202 constitute a UBA domain; that stretch reads LEAKDIELVMAQANVSRKKAVKALRENDNDIVNSIMALSI.

The protein belongs to the NAC-alpha family. Part of the nascent polypeptide-associated complex (NAC), consisting of egd2 and egd1. NAC associates with ribosomes via egd1.

It localises to the cytoplasm. Its subcellular location is the nucleus. Component of the nascent polypeptide-associated complex (NAC), a dynamic component of the ribosomal exit tunnel, protecting the emerging polypeptides from interaction with other cytoplasmic proteins to ensure appropriate nascent protein targeting. The NAC complex also promotes mitochondrial protein import by enhancing productive ribosome interactions with the outer mitochondrial membrane and blocks the inappropriate interaction of ribosomes translating non-secretory nascent polypeptides with translocation sites in the membrane of the endoplasmic reticulum. Egd2 may also be involved in transcription regulation. This Aspergillus niger (strain ATCC MYA-4892 / CBS 513.88 / FGSC A1513) protein is Nascent polypeptide-associated complex subunit alpha (egd2).